The sequence spans 235 residues: Large ribosomal subunit protein uL1 (235 aa).

Belongs to the universal ribosomal protein uL1 family. In terms of assembly, part of the 50S ribosomal subunit.

Its function is as follows. Binds directly to 23S rRNA. The L1 stalk is quite mobile in the ribosome, and is involved in E site tRNA release. In terms of biological role, protein L1 is also a translational repressor protein, it controls the translation of the L11 operon by binding to its mRNA. This chain is Large ribosomal subunit protein uL1, found in Fervidobacterium nodosum (strain ATCC 35602 / DSM 5306 / Rt17-B1).